Here is a 311-residue protein sequence, read N- to C-terminus: Bifunctional pinoresinol-lariciresinol reductase (311 aa).

NADP(+) contacts are provided by residues 10 to 16, R35, and K44; that span reads GGTGYLG. K138 (proton acceptor) is an active-site residue. An NADP(+)-binding site is contributed by R142. Residue H270 participates in substrate binding.

This sequence belongs to the NmrA-type oxidoreductase family. Isoflavone reductase subfamily. In terms of assembly, dimer. As to expression, expressed in rhizomes, stems, and leaves.

It carries out the reaction (-)-secoisolariciresinol + NADP(+) = (+)-lariciresinol + NADPH + H(+). It catalyses the reaction (+)-lariciresinol + NADP(+) = (+)-pinoresinol + NADPH + H(+). It functions in the pathway aromatic compound metabolism; phenylpropanoid biosynthesis. In terms of biological role, reductase involved in lignan biosynthesis. Also involved in the biosynthesis of etoposide, a chemotherapeutic compound of the topoisomerase inhibitor family. Catalyzes the enantioselective sequential conversion of (+)-pinoresinol into (+)-lariciresinol and of (+)-lariciresinol into (-)-secoisolariciresinol. Abstracts the 4R-hydride from the NADPH cofactor during catalysis. The sequence is that of Bifunctional pinoresinol-lariciresinol reductase from Sinopodophyllum hexandrum (Himalayan may apple).